A 659-amino-acid chain; its full sequence is Zeaxanthin epoxidase, chloroplastic (659 aa).

The N-terminal 50 residues, 1 to 50, are a transit peptide targeting the chloroplast; that stretch reads MALLSATAPAKTRFSLFSHEEAQHPHPHALSACCGGGASGKRQRARARVA. FAD-binding positions include 79-107 and 357-370; these read RVLV…TVFE and TFNW…LLGD. One can recognise an FHA domain in the interval 553-607; that stretch reads LSIGSRSDPSNSTASLALPLPQISENHATITCKNKAFYVTDNGSEHGTWITDNEG.

Requires FAD as cofactor. As to expression, expressed in young microspores.

It localises to the plastid. The protein localises to the chloroplast membrane. It is found in the chloroplast thylakoid membrane. The catalysed reaction is all-trans-zeaxanthin + 4 reduced [2Fe-2S]-[ferredoxin] + 2 O2 + 4 H(+) = all-trans-violaxanthin + 4 oxidized [2Fe-2S]-[ferredoxin] + 2 H2O. It functions in the pathway plant hormone biosynthesis; abscisate biosynthesis. Functionally, zeaxanthin epoxidase that plays an important role in the xanthophyll cycle and abscisic acid (ABA) biosynthesis. Converts zeaxanthin into antheraxanthin and subsequently violaxanthin. Required for resistance to osmotic and drought stresses, seed development and dormancy. The chain is Zeaxanthin epoxidase, chloroplastic (ZEP) from Oryza sativa subsp. japonica (Rice).